Here is a 219-residue protein sequence, read N- to C-terminus: uncharacterized protein (219 aa).

This is an uncharacterized protein from Mycoplasma genitalium (strain ATCC 33530 / DSM 19775 / NCTC 10195 / G37) (Mycoplasmoides genitalium).